A 464-amino-acid polypeptide reads, in one-letter code: Fumarate hydratase class II 1 (464 aa).

Residues 96 to 98, 127 to 130, 137 to 139, and threonine 185 contribute to the substrate site; these read SGT, HPND, and SSN. The active-site Proton donor/acceptor is the histidine 186. Residue serine 316 is part of the active site. Residues serine 317 and 322 to 324 contribute to the substrate site; that span reads KVN.

This sequence belongs to the class-II fumarase/aspartase family. Fumarase subfamily. As to quaternary structure, homotetramer.

Its subcellular location is the cytoplasm. It catalyses the reaction (S)-malate = fumarate + H2O. The protein operates within carbohydrate metabolism; tricarboxylic acid cycle; (S)-malate from fumarate: step 1/1. Functionally, involved in the TCA cycle. Catalyzes the stereospecific interconversion of fumarate to L-malate. In Pseudomonas aeruginosa (strain ATCC 15692 / DSM 22644 / CIP 104116 / JCM 14847 / LMG 12228 / 1C / PRS 101 / PAO1), this protein is Fumarate hydratase class II 1.